Consider the following 91-residue polypeptide: ATP synthase subunit c (91 aa).

2 consecutive transmembrane segments (helical) span residues 4-24 and 53-73; these read LTMCMLAAGFGMAIGAFGTGI and IGLAMIESLAIYVLVVCLIIL.

This sequence belongs to the ATPase C chain family. In terms of assembly, F-type ATPases have 2 components, F(1) - the catalytic core - and F(0) - the membrane proton channel. F(1) has five subunits: alpha(3), beta(3), gamma(1), delta(1), epsilon(1). F(0) has three main subunits: a(1), b(2) and c(10-14). The alpha and beta chains form an alternating ring which encloses part of the gamma chain. F(1) is attached to F(0) by a central stalk formed by the gamma and epsilon chains, while a peripheral stalk is formed by the delta and b chains.

The protein resides in the cell inner membrane. Functionally, f(1)F(0) ATP synthase produces ATP from ADP in the presence of a proton or sodium gradient. F-type ATPases consist of two structural domains, F(1) containing the extramembraneous catalytic core and F(0) containing the membrane proton channel, linked together by a central stalk and a peripheral stalk. During catalysis, ATP synthesis in the catalytic domain of F(1) is coupled via a rotary mechanism of the central stalk subunits to proton translocation. Key component of the F(0) channel; it plays a direct role in translocation across the membrane. A homomeric c-ring of between 10-14 subunits forms the central stalk rotor element with the F(1) delta and epsilon subunits. In Geobacter metallireducens (strain ATCC 53774 / DSM 7210 / GS-15), this protein is ATP synthase subunit c.